The primary structure comprises 27 residues: DPCYEVCLQQHGNVKECEEACKHPVEY.

2 disulfides stabilise this stretch: Cys3-Cys21 and Cys7-Cys17.

It belongs to the short scorpion toxin superfamily. Potassium channel inhibitor kappa-KTx family. Kappa-KTx 2 subfamily. In terms of tissue distribution, expressed by the venom gland.

The protein localises to the secreted. In terms of biological role, omTx1 decreases the amplitude of the potassium current of the rat channels Kv1.1/KCNA1 by 17% and Kv1.2/KCNA2 by 12% as well as human Kv1.3/KCNA3 by 24%. Functionally, omTx2 decreases the amplitude of the potassium current of the rat channels Kv1.1/KCNA1 by 8% and Kv1.2/KCNA2 by 10% as well as human Kv1.3/KCNA3 by 36%. Also alters glucose-induced insulin release from pancreatic islets. The protein is Potassium channel toxin kappa-KTx 2.2 of Opisthacanthus madagascariensis (Scorpion).